The chain runs to 279 residues: Acetyl-coenzyme A carboxylase carboxyl transferase subunit beta (279 aa).

Residues 27 to 279 (LFLACPYCGT…IVKLHHRTEI (253 aa)) enclose the CoA carboxyltransferase N-terminal domain. Positions 31, 34, 49, and 52 each coordinate Zn(2+). The C4-type zinc finger occupies 31-52 (CPYCGTQMYNKQLGDYRVCAKC).

The protein belongs to the AccD/PCCB family. As to quaternary structure, acetyl-CoA carboxylase is a heterohexamer composed of biotin carboxyl carrier protein (AccB), biotin carboxylase (AccC) and two subunits each of ACCase subunit alpha (AccA) and ACCase subunit beta (AccD). The cofactor is Zn(2+).

It localises to the cytoplasm. The enzyme catalyses N(6)-carboxybiotinyl-L-lysyl-[protein] + acetyl-CoA = N(6)-biotinyl-L-lysyl-[protein] + malonyl-CoA. It participates in lipid metabolism; malonyl-CoA biosynthesis; malonyl-CoA from acetyl-CoA: step 1/1. Its function is as follows. Component of the acetyl coenzyme A carboxylase (ACC) complex. Biotin carboxylase (BC) catalyzes the carboxylation of biotin on its carrier protein (BCCP) and then the CO(2) group is transferred by the transcarboxylase to acetyl-CoA to form malonyl-CoA. In Leuconostoc citreum (strain KM20), this protein is Acetyl-coenzyme A carboxylase carboxyl transferase subunit beta.